Here is a 266-residue protein sequence, read N- to C-terminus: Glutaconate CoA-transferase subunit B (266 aa).

The active site involves glutamate 54.

Belongs to the 3-oxoacid CoA-transferase subunit B family. As to quaternary structure, heterooctamer of four A and four B subunits.

It is found in the cytoplasm. It catalyses the reaction trans-glutaconate + acetyl-CoA = (2E)-glutaconyl-CoA + acetate. Its pathway is amino-acid degradation; L-glutamate degradation via hydroxyglutarate pathway; crotonoyl-CoA from L-glutamate: step 3/5. Functionally, catalyzes the transfer of the CoA moiety from acetyl-CoA to (R)-2-hydroxyglutarate and related compounds like glutaconate. The chain is Glutaconate CoA-transferase subunit B (gctB) from Acidaminococcus fermentans (strain ATCC 25085 / DSM 20731 / CCUG 9996 / CIP 106432 / VR4).